Here is a 288-residue protein sequence, read N- to C-terminus: 3'-5' exonuclease (288 aa).

The disordered stretch occupies residues 30-67 (RSSSSSSSAAPTVQATTSVHGHEEDPNQIPNNIRRQLP). 2 stretches are compositionally biased toward polar residues: residues 38–48 (AAPTVQATTSV) and 57–67 (QIPNNIRRQLP). Residues 129 to 279 (FVGLDIEWRP…ASWHLYKVLK (151 aa)) form the 3'-5' exonuclease domain.

Interacts with KU70 and KU80. Interacts with RECQL2. Mg(2+) serves as cofactor. It depends on Mn(2+) as a cofactor. In terms of tissue distribution, expressed ubiquitously.

It localises to the nucleus. Its activity is regulated as follows. Activated upon interaction with the KU heterodimer. Not stimulated by ATP. Functionally, exonuclease that digests recessed strands of DNA duplexes in the 3' to 5' direction but hardly single-stranded DNA or blunt-ended duplexes. Also able to digest 3'-protruding strands and 3'-recessed strand termini of duplexes containing mismatched bases. The sequence is that of 3'-5' exonuclease (WEX) from Arabidopsis thaliana (Mouse-ear cress).